The following is a 201-amino-acid chain: MMTFKNLRYGLSSSVVLAASLFSVLSYAATDSIGLTVITTVEMGTCTATLVNDSDQDISVVDFGDVYISEINAKTKVKTFKLKFKDCAGIPNKKAQIKLTKRATCEGTANDGAGFANGSTAADKASAVAVEVWSTVTPATGSATQFSCVTPASQEVTISTAANAVVYYPMSARLVVEKNKTVNNVTAGKFSAPATFTVTYN.

Residues 1–28 (MMTFKNLRYGLSSSVVLAASLFSVLSYA) form the signal peptide.

Belongs to the fimbrial protein family.

The protein resides in the fimbrium. Its function is as follows. Part of the yadCKLM-htrE-yadVN fimbrial operon. Could contribute to adhesion to various surfaces in specific environmental niches. This is an uncharacterized protein from Escherichia coli (strain K12).